The primary structure comprises 633 residues: Micronuclear linker histone polyprotein (633 aa).

2 consecutive DNA-binding regions (HMG box) follow at residues proline 12–tyrosine 74 and proline 96–asparagine 164. The interval alanine 170 to glutamine 633 is disordered. Residues lysine 174–serine 190 show a composition bias toward basic residues. 2 stretches are compositionally biased toward low complexity: residues serine 212–serine 224 and asparagine 253–serine 271. 2 stretches are compositionally biased toward basic residues: residues lysine 272 to serine 309 and serine 330 to serine 352. Composition is skewed to basic and acidic residues over residues lysine 353 to lysine 374 and alanine 382 to threonine 401. The segment covering asparagine 406–glycine 416 has biased composition (low complexity). Residues serine 417 to serine 444 show a composition bias toward basic residues. A compositionally biased stretch (polar residues) spans proline 446–serine 469. A compositionally biased stretch (basic and acidic residues) spans arginine 478 to asparagine 491. Residues serine 496 to lysine 524 are compositionally biased toward basic residues. Basic and acidic residues-rich tracts occupy residues serine 540–alanine 550 and glutamate 559–lysine 612.

In terms of processing, all four histones are processed from the precursor molecule. Phosphorylated in growing and dividing cells but not in nongrowing (starved) cells. Post-translationally, the N-terminus of MIC LH-alpha and MIC LH-delta is blocked.

The protein localises to the nucleus. The protein resides in the chromosome. The polypeptide is Micronuclear linker histone polyprotein (MLH) (Tetrahymena thermophila (strain SB210)).